Consider the following 151-residue polypeptide: UPAR/Ly6 domain-containing protein rtv (151 aa).

The first 19 residues, 1–19 (MQFTSLLLAVIFLISLVSI), serve as a signal peptide directing secretion. At 20–125 (DGLLRRCYQC…QGDLCNGARS (106 aa)) the chain is on the extracellular side. Intrachain disulfides connect C26–C65, C29–C38, C60–C88, C100–C113, and C115–C120. A glycan (N-linked (GlcNAc...) asparagine) is linked at N45. The GPI-anchor amidated asparagine moiety is linked to residue N121. Residues 122-151 (GARSWSSAPQMILITMLPLLGSWLLQRMRN) constitute a propeptide, removed in mature form. The helical transmembrane segment at 126-146 (WSSAPQMILITMLPLLGSWLL) threads the bilayer. The Cytoplasmic portion of the chain corresponds to 147–151 (QRMRN).

The protein belongs to the quiver family.

The protein resides in the cell membrane. Its function is as follows. Required for chitin fiber assembly and organization involved in cuticle formation and tracheal development. The protein is UPAR/Ly6 domain-containing protein rtv of Drosophila melanogaster (Fruit fly).